The sequence spans 304 residues: Homoserine kinase (304 aa).

Residue 90–100 (PLARGLGSSAS) participates in ATP binding.

It belongs to the GHMP kinase family. Homoserine kinase subfamily.

The protein localises to the cytoplasm. The catalysed reaction is L-homoserine + ATP = O-phospho-L-homoserine + ADP + H(+). It functions in the pathway amino-acid biosynthesis; L-threonine biosynthesis; L-threonine from L-aspartate: step 4/5. Its function is as follows. Catalyzes the ATP-dependent phosphorylation of L-homoserine to L-homoserine phosphate. The chain is Homoserine kinase from Staphylococcus aureus (strain JH9).